The chain runs to 301 residues: Homeobox protein Hox-D13 (301 aa).

Disordered regions lie at residues 1-20 and 55-75; these read MDGL…TPGQ and GERS…PGSG. Residues 8–18 show a composition bias toward gly residues; that stretch reads SSGGGGGGGTP. A DNA-binding region (homeobox) is located at residues 234–293; the sequence is GRKKRVPYTKLQLKELENEYAINKFINKDKRRRISAATNLSERQVTIWFQNRRVKDKKIV.

It belongs to the Abd-B homeobox family.

Its subcellular location is the nucleus. Functionally, sequence-specific transcription factor that binds gene promoters and activates their transcription. Part of a developmental regulatory system that provides cells with specific positional identities on the anterior-posterior axis. The sequence is that of Homeobox protein Hox-D13 (HOXD13) from Gallus gallus (Chicken).